A 956-amino-acid chain; its full sequence is Glutamate receptor ionotropic, kainate 4 (956 aa).

The first 20 residues, M1–C20, serve as a signal peptide directing secretion. Residues S21–P545 lie on the Extracellular side of the membrane. N158, N220, N272, N286, N323, N408, N415, and N479 each carry an N-linked (GlcNAc...) asparagine glycan. Residues G500, T502, and R507 each contribute to the L-glutamate site. The helical transmembrane segment at G546–A566 threads the bilayer. The Cytoplasmic segment spans residues R567–G623. The chain crosses the membrane as a helical span at residues V624–L644. Residues T645–N804 lie on the Extracellular side of the membrane. Positions 674, 675, and 723 each coordinate L-glutamate. N-linked (GlcNAc...) asparagine glycosylation occurs at N736. Residues I805–L825 traverse the membrane as a helical segment. The Cytoplasmic portion of the chain corresponds to E826 to E956. The segment at L931–E956 is disordered. The segment covering R939–K948 has biased composition (basic and acidic residues).

It belongs to the glutamate-gated ion channel (TC 1.A.10.1) family. GRIK4 subfamily. As to quaternary structure, homodimer. Can form functional heteromeric receptors with GRIK1, GRIK2 and GRIK3. As to expression, strong expression in hippocampal CA3 pyramidal cells. Low expression in hippocampal dentate granule cells, in layers II, V and VI of the cortex, and in cerebellar Purkinje cells. No expression in the striatum, reticular thalamus, hypothalamus or amygdaloid complex.

It is found in the cell membrane. The protein localises to the postsynaptic cell membrane. The protein resides in the presynaptic cell membrane. Functionally, ionotropic glutamate receptor that functions as a cation-permeable ligand-gated ion channel, gated by L-glutamate and the glutamatergic agonist kainic acid. Cannot form functional channels on its own and shows channel activity only in heteromeric assembly with GRIK1, GRIK2 and GRIK3 subunits. This is Glutamate receptor ionotropic, kainate 4 (Grik4) from Rattus norvegicus (Rat).